The sequence spans 337 residues: Quinolinate synthase (337 aa).

Positions 38 and 59 each coordinate iminosuccinate. C104 serves as a coordination point for [4Fe-4S] cluster. Residues 130-132 (YAN) and S147 each bind iminosuccinate. Residue C191 participates in [4Fe-4S] cluster binding. Residues 217–219 (HPE) and T234 contribute to the iminosuccinate site. Residue C288 participates in [4Fe-4S] cluster binding.

This sequence belongs to the quinolinate synthase family. Type 1 subfamily. The cofactor is [4Fe-4S] cluster.

Its subcellular location is the cytoplasm. It carries out the reaction iminosuccinate + dihydroxyacetone phosphate = quinolinate + phosphate + 2 H2O + H(+). The protein operates within cofactor biosynthesis; NAD(+) biosynthesis; quinolinate from iminoaspartate: step 1/1. In terms of biological role, catalyzes the condensation of iminoaspartate with dihydroxyacetone phosphate to form quinolinate. The polypeptide is Quinolinate synthase (Wigglesworthia glossinidia brevipalpis).